Consider the following 533-residue polypeptide: uncharacterized protein (533 aa).

Residues 1–26 form a disordered region; it reads MKRFFSKLFSKSPTSGRVPSPDSDYS. Ser20 and Ser23 each carry phosphoserine. Phosphotyrosine is present on Tyr25. A Phosphoserine modification is found at Ser26. The next 10 membrane-spanning stretches (helical) occupy residues 178–198, 213–230, 242–264, 274–296, 313–333, 353–373, 394–414, 435–455, 466–486, and 495–515; these read ILAV…HILI, YMRV…FEAL, PITY…LVWH, APVA…ICFS, LSPM…EWAA, SILL…AVAS, RVAY…IFCF, IFPI…GGGL, GLIS…FVVV, and IWCG…TVLF.

Belongs to the multi antimicrobial extrusion (MATE) (TC 2.A.66.1) family.

The protein resides in the vacuole membrane. This is an uncharacterized protein from Schizosaccharomyces pombe (strain 972 / ATCC 24843) (Fission yeast).